Reading from the N-terminus, the 160-residue chain is Eukaryotic translation initiation factor 5A-1/2 (160 aa).

Positions 1 to 12 are enriched in basic and acidic residues; it reads MSDEEHHFESKA. Residues 1-21 form a disordered region; the sequence is MSDEEHHFESKADAGASKTYP. Residue Lys-52 is modified to Hypusine.

The protein belongs to the eIF-5A family. Post-translationally, lys-52 undergoes hypusination, a unique post-translational modification that consists in the addition of a butylamino group from spermidine to lysine side chain, leading to the formation of the unusual amino acid hypusine. eIF-5As are the only known proteins to undergo this modification, which is essential for their function.

Its function is as follows. Translation factor that promotes translation elongation and termination, particularly upon ribosome stalling at specific amino acid sequence contexts. Binds between the exit (E) and peptidyl (P) site of the ribosome and promotes rescue of stalled ribosome: specifically required for efficient translation of polyproline-containing peptides as well as other motifs that stall the ribosome. Acts as a ribosome quality control (RQC) cofactor by joining the RQC complex to facilitate peptidyl transfer during CAT tailing step. The chain is Eukaryotic translation initiation factor 5A-1/2 (EIF5A1) from Solanum tuberosum (Potato).